A 225-amino-acid chain; its full sequence is MSTIAIVDYGMGNFHSVARALQHAAPDADIRICNRPEQIDAADRVVFPGQGAMPDCMRTLNESGLRAAVERAAASKPLMGVCVGEQMLFERSEEGGTPCLGIFPGEVRRFAGPQFADPVAADQAAAAPPAAARERLKVPHMGWNQVRQTRSHALWEGIPDGTHFYFVHSYYAAPSDPALTTGVTDYGVAFTCAVAAANIFAVQFHPEKSAEHGLRLYRNFVDWQP.

Residues 3–225 enclose the Glutamine amidotransferase type-1 domain; it reads TIAIVDYGMG…LYRNFVDWQP (223 aa). Catalysis depends on cysteine 82, which acts as the Nucleophile. Active-site residues include histidine 205 and glutamate 207.

As to quaternary structure, heterodimer of HisH and HisF.

The protein resides in the cytoplasm. It carries out the reaction 5-[(5-phospho-1-deoxy-D-ribulos-1-ylimino)methylamino]-1-(5-phospho-beta-D-ribosyl)imidazole-4-carboxamide + L-glutamine = D-erythro-1-(imidazol-4-yl)glycerol 3-phosphate + 5-amino-1-(5-phospho-beta-D-ribosyl)imidazole-4-carboxamide + L-glutamate + H(+). The enzyme catalyses L-glutamine + H2O = L-glutamate + NH4(+). Its pathway is amino-acid biosynthesis; L-histidine biosynthesis; L-histidine from 5-phospho-alpha-D-ribose 1-diphosphate: step 5/9. Functionally, IGPS catalyzes the conversion of PRFAR and glutamine to IGP, AICAR and glutamate. The HisH subunit catalyzes the hydrolysis of glutamine to glutamate and ammonia as part of the synthesis of IGP and AICAR. The resulting ammonia molecule is channeled to the active site of HisF. This chain is Imidazole glycerol phosphate synthase subunit HisH, found in Bordetella pertussis (strain Tohama I / ATCC BAA-589 / NCTC 13251).